We begin with the raw amino-acid sequence, 232 residues long: Purine nucleoside phosphorylase DeoD-type (232 aa).

His-4 is an a purine D-ribonucleoside binding site. Phosphate is bound by residues Gly-20, Arg-24, Arg-43, and 87 to 90 (RIGT). Residues 179-181 (EME) and 203-204 (SD) each bind a purine D-ribonucleoside. The Proton donor role is filled by Asp-204.

It belongs to the PNP/UDP phosphorylase family. Homohexamer; trimer of homodimers.

It catalyses the reaction a purine D-ribonucleoside + phosphate = a purine nucleobase + alpha-D-ribose 1-phosphate. It carries out the reaction a purine 2'-deoxy-D-ribonucleoside + phosphate = a purine nucleobase + 2-deoxy-alpha-D-ribose 1-phosphate. Functionally, catalyzes the reversible phosphorolytic breakdown of the N-glycosidic bond in the beta-(deoxy)ribonucleoside molecules, with the formation of the corresponding free purine bases and pentose-1-phosphate. This Caldanaerobacter subterraneus subsp. tengcongensis (strain DSM 15242 / JCM 11007 / NBRC 100824 / MB4) (Thermoanaerobacter tengcongensis) protein is Purine nucleoside phosphorylase DeoD-type.